We begin with the raw amino-acid sequence, 366 residues long: Carbamoyl phosphate synthase small chain (366 aa).

The tract at residues 1–168 is CPSase; that stretch reads MYGILVLEDG…KETVVYSADD (168 aa). The L-glutamine site is built by serine 45, glycine 220, and glycine 222. In terms of domain architecture, Glutamine amidotransferase type-1 spans 172–363; the sequence is KCVLIDCGVK…VELGIKFKAE (192 aa). Cysteine 247 acts as the Nucleophile in catalysis. L-glutamine contacts are provided by leucine 248, glutamine 251, asparagine 289, glycine 291, and phenylalanine 292. Active-site residues include histidine 336 and glutamate 338.

The protein belongs to the CarA family. As to quaternary structure, composed of two chains; the small (or glutamine) chain promotes the hydrolysis of glutamine to ammonia, which is used by the large (or ammonia) chain to synthesize carbamoyl phosphate. Tetramer of heterodimers (alpha,beta)4.

It catalyses the reaction hydrogencarbonate + L-glutamine + 2 ATP + H2O = carbamoyl phosphate + L-glutamate + 2 ADP + phosphate + 2 H(+). The catalysed reaction is L-glutamine + H2O = L-glutamate + NH4(+). The protein operates within amino-acid biosynthesis; L-arginine biosynthesis; carbamoyl phosphate from bicarbonate: step 1/1. Its pathway is pyrimidine metabolism; UMP biosynthesis via de novo pathway; (S)-dihydroorotate from bicarbonate: step 1/3. Its function is as follows. Small subunit of the glutamine-dependent carbamoyl phosphate synthetase (CPSase). CPSase catalyzes the formation of carbamoyl phosphate from the ammonia moiety of glutamine, carbonate, and phosphate donated by ATP, constituting the first step of 2 biosynthetic pathways, one leading to arginine and/or urea and the other to pyrimidine nucleotides. The small subunit (glutamine amidotransferase) binds and cleaves glutamine to supply the large subunit with the substrate ammonia. The protein is Carbamoyl phosphate synthase small chain of Methanococcus maripaludis (strain C6 / ATCC BAA-1332).